The chain runs to 125 residues: Large ribosomal subunit protein uL18 (125 aa).

Glycine 2 bears the N-acetylglycine mark. An N6-acetyllysine mark is found at lysine 5 and lysine 48.

The protein belongs to the universal ribosomal protein uL18 family. As to quaternary structure, component of the large ribosomal subunit (LSU). Part of the 5S RNP complex, which is a LSU subcomplex composed of the 5S RNA, RPL5 and RPL11. Component of a hexameric 5S RNP precursor complex, composed of 5S RNA, RRS1, RPF2/BXDC1, RPL5, RPL11 and HEATR3; this complex acts as a precursor for ribosome assembly. Interacts with NVL in an ATP-dependent manner. Interacts with RRP1B. Interacts with IPO5, IPO7 and KPNB1; these interactions may be involved in RPL5 nuclear import for the assembly of ribosomal subunits. Interacts with RRP1B.

Its subcellular location is the cytoplasm. The protein localises to the nucleus. It is found in the nucleolus. In terms of biological role, component of the ribosome, a large ribonucleoprotein complex responsible for the synthesis of proteins in the cell. The small ribosomal subunit (SSU) binds messenger RNAs (mRNAs) and translates the encoded message by selecting cognate aminoacyl-transfer RNA (tRNA) molecules. The large subunit (LSU) contains the ribosomal catalytic site termed the peptidyl transferase center (PTC), which catalyzes the formation of peptide bonds, thereby polymerizing the amino acids delivered by tRNAs into a polypeptide chain. The nascent polypeptides leave the ribosome through a tunnel in the LSU and interact with protein factors that function in enzymatic processing, targeting, and the membrane insertion of nascent chains at the exit of the ribosomal tunnel. As part of the 5S RNP/5S ribonucleoprotein particle it is an essential component of the LSU, required for its formation and the maturation of rRNAs. It also couples ribosome biogenesis to p53/TP53 activation. As part of the 5S RNP it accumulates in the nucleoplasm and inhibits MDM2, when ribosome biogenesis is perturbed, mediating the stabilization and the activation of TP53. The sequence is that of Large ribosomal subunit protein uL18 (RPL5) from Sus scrofa (Pig).